The chain runs to 86 residues: Translation initiation factor IF-1 3 (86 aa).

One can recognise an S1-like domain in the interval M1 to I72.

It belongs to the IF-1 family. In terms of assembly, component of the 30S ribosomal translation pre-initiation complex which assembles on the 30S ribosome in the order IF-2 and IF-3, IF-1 and N-formylmethionyl-tRNA(fMet); mRNA recruitment can occur at any time during PIC assembly.

It localises to the cytoplasm. Functionally, one of the essential components for the initiation of protein synthesis. Stabilizes the binding of IF-2 and IF-3 on the 30S subunit to which N-formylmethionyl-tRNA(fMet) subsequently binds. Helps modulate mRNA selection, yielding the 30S pre-initiation complex (PIC). Upon addition of the 50S ribosomal subunit IF-1, IF-2 and IF-3 are released leaving the mature 70S translation initiation complex. The chain is Translation initiation factor IF-1 3 from Acidovorax sp. (strain JS42).